Reading from the N-terminus, the 469-residue chain is Spliceosome-associated protein CWC27 homolog (469 aa).

Position 2 is an N-acetylserine (Ser-2). Residues 11–166 (TNGKVLLKTT…NPHRIKSCEV (156 aa)) form the PPIase cyclophilin-type domain. The segment covering 175–193 (TPREIKKPKNEKPEEEVKK) has biased composition (basic and acidic residues). Disordered stretches follow at residues 175–415 (TPRE…DDEG) and 428–469 (RKVK…KERR). The stretch at 206–229 (SFGEEAEEEEEEVNRVSQSMKGRS) forms a coiled coil. Basic and acidic residues predominate over residues 231-241 (SSHDLLKDDPH). Residues 256 to 278 (TGDLEDDGEDDSAERDEYMEDDE) show a composition bias toward acidic residues. Basic and acidic residues-rich tracts occupy residues 302 to 341 (GDGE…KVEE) and 356 to 368 (EYRR…EALR). A coiled-coil region spans residues 309 to 371 (ASRSEELRKE…QKYEALRKQQ (63 aa)). Polar residues predominate over residues 384–403 (ALLSQFKSKLTQAITETPEN). Residues 454-469 (RREESKKLLREKKERR) show a composition bias toward basic and acidic residues.

This sequence belongs to the cyclophilin-type PPIase family. Part of the activated spliceosome B/catalytic step 1 spliceosome, one of the forms of the spliceosome which has a well-formed active site but still cannot catalyze the branching reaction and is composed at least of 52 proteins, the U2, U5 and U6 snRNAs and the pre-mRNA. Recruited during early steps of activated spliceosome B maturation, it is probably one of the first proteins released from this complex as he matures to the spliceosome C complex. Component of the minor spliceosome, which splices U12-type introns.

It is found in the nucleus. In terms of biological role, as part of the spliceosome, plays a role in pre-mRNA splicing. Probable inactive PPIase with no peptidyl-prolyl cis-trans isomerase activity. As a component of the minor spliceosome, involved in the splicing of U12-type introns in pre-mRNAs. The sequence is that of Spliceosome-associated protein CWC27 homolog from Mus musculus (Mouse).